A 302-amino-acid polypeptide reads, in one-letter code: Dermonecrotic toxin LiSicTox-alphaIA2bii (302 aa).

Residues 1-14 form the signal peptide; that stretch reads IALILVCWSVLSQA. Residues 15-22 constitute a propeptide that is removed on maturation; it reads AQTDVEGR. The active site involves histidine 34. Glutamate 54 and aspartate 56 together coordinate Mg(2+). Histidine 70 serves as the catalytic Nucleophile. 2 disulfides stabilise this stretch: cysteine 74–cysteine 80 and cysteine 76–cysteine 219. Aspartate 114 lines the Mg(2+) pocket. Asparagine 279 carries an N-linked (GlcNAc...) asparagine glycan.

Belongs to the arthropod phospholipase D family. Class II subfamily. It depends on Mg(2+) as a cofactor. In terms of tissue distribution, expressed by the venom gland.

The protein localises to the secreted. It catalyses the reaction an N-(acyl)-sphingosylphosphocholine = an N-(acyl)-sphingosyl-1,3-cyclic phosphate + choline. The enzyme catalyses an N-(acyl)-sphingosylphosphoethanolamine = an N-(acyl)-sphingosyl-1,3-cyclic phosphate + ethanolamine. It carries out the reaction a 1-acyl-sn-glycero-3-phosphocholine = a 1-acyl-sn-glycero-2,3-cyclic phosphate + choline. The catalysed reaction is a 1-acyl-sn-glycero-3-phosphoethanolamine = a 1-acyl-sn-glycero-2,3-cyclic phosphate + ethanolamine. Functionally, dermonecrotic toxins cleave the phosphodiester linkage between the phosphate and headgroup of certain phospholipids (sphingolipid and lysolipid substrates), forming an alcohol (often choline) and a cyclic phosphate. This toxin acts on sphingomyelin (SM). It may also act on ceramide phosphoethanolamine (CPE), lysophosphatidylcholine (LPC) and lysophosphatidylethanolamine (LPE), but not on lysophosphatidylserine (LPS), and lysophosphatidylglycerol (LPG). It acts by transphosphatidylation, releasing exclusively cyclic phosphate products as second products. Induces dermonecrosis, hemolysis, increased vascular permeability, edema, inflammatory response, and platelet aggregation. In Loxosceles intermedia (Brown spider), this protein is Dermonecrotic toxin LiSicTox-alphaIA2bii.